Reading from the N-terminus, the 266-residue chain is Protein PYRICULARIA ORYZAE RESISTANCE 21 (266 aa).

Positions 1–68 (MGILVILVDL…IWCKAGKIIK (68 aa)) constitute an HMA domain. Residues Cys-12 and Cys-15 each contribute to the a metal cation site. A disordered region spans residues 129 to 156 (CEKPKPCEKPPPCKPEEPPKPPPEKPPP). Positions 142–156 (KPEEPPKPPPEKPPP) are enriched in basic and acidic residues.

Its function is as follows. Involved in defense responses. Contributes to slowing defense responses toward Magnaporthe oryzae. The protein is Protein PYRICULARIA ORYZAE RESISTANCE 21 of Oryza sativa subsp. japonica (Rice).